The chain runs to 190 residues: T-cell receptor gamma chain C region 5/10-13 (190 aa).

Positions 1–157 are c region; that stretch reads DKRTDSDFSP…LQVTTTYAFY (157 aa). The chain crosses the membrane as a helical span at residues 158–178; sequence TYLILFFKSMVHLAFVVFCLF. The Cytoplasmic portion of the chain corresponds to 179–190; it reads RRAAMSCDDQRS.

It localises to the membrane. The protein is T-cell receptor gamma chain C region 5/10-13 of Mus musculus (Mouse).